The primary structure comprises 430 residues: tRNA(Ile)-lysidine synthase (430 aa).

24-29 contributes to the ATP binding site; the sequence is SGGLDS.

It belongs to the tRNA(Ile)-lysidine synthase family.

It localises to the cytoplasm. The enzyme catalyses cytidine(34) in tRNA(Ile2) + L-lysine + ATP = lysidine(34) in tRNA(Ile2) + AMP + diphosphate + H(+). Functionally, ligates lysine onto the cytidine present at position 34 of the AUA codon-specific tRNA(Ile) that contains the anticodon CAU, in an ATP-dependent manner. Cytidine is converted to lysidine, thus changing the amino acid specificity of the tRNA from methionine to isoleucine. The protein is tRNA(Ile)-lysidine synthase of Haemophilus influenzae (strain PittEE).